The primary structure comprises 314 residues: MGKRVVIALGGNALQQRGQKGSYEEMMDNVRKTARQIAEIIARGYEVVITHGNGPQVGSLLLHMDAGQATYGIPAQPMDVAGAMSQGWIGYMIQQALKNELRKRGMEKKVVTIITQTIVDKNDPAFQNPTKPVGPFYDEETAKRLAREKGWIVKEDSGRGWRRVVPSPDPKGHVEAETIKKLVERGVIVIASGGGGVPVILEDGEIKGVEAVIDKDLAGEKLAEEVNADIFMILTDVNGAALYYGTEKEQWLREVKVEELRKYYEEGHFKAGSMGPKVLAAIRFIEWGGERAIIAHLEKAVEALEGKTGTQVLP.

It belongs to the carbamate kinase family. Homodimer.

The protein localises to the cytoplasm. The enzyme catalyses hydrogencarbonate + NH4(+) + ATP = carbamoyl phosphate + ADP + H2O + H(+). Functionally, carbamate kinase that plays a biosynthetic role in that it produces carbamoyl-phosphate. The protein is Carbamate kinase (cpkA) of Pyrococcus furiosus (strain ATCC 43587 / DSM 3638 / JCM 8422 / Vc1).